Here is an 86-residue protein sequence, read N- to C-terminus: Putative membrane protein insertion efficiency factor (86 aa).

Belongs to the UPF0161 family.

The protein localises to the cell inner membrane. Could be involved in insertion of integral membrane proteins into the membrane. In Pseudomonas aeruginosa (strain LESB58), this protein is Putative membrane protein insertion efficiency factor.